The following is a 507-amino-acid chain: ATP synthase subunit alpha, plastid (507 aa).

An ATP-binding site is contributed by G170 to T177.

Belongs to the ATPase alpha/beta chains family. In terms of assembly, F-type ATPases have 2 components, CF(1) - the catalytic core - and CF(0) - the membrane proton channel. CF(1) has five subunits: alpha(3), beta(3), gamma(1), delta(1), epsilon(1). CF(0) has four main subunits: a, b, b' and c.

The protein localises to the plastid membrane. The catalysed reaction is ATP + H2O + 4 H(+)(in) = ADP + phosphate + 5 H(+)(out). In terms of biological role, produces ATP from ADP in the presence of a proton gradient across the membrane. The alpha chain is a regulatory subunit. The polypeptide is ATP synthase subunit alpha, plastid (Cuscuta gronovii (Common dodder)).